Reading from the N-terminus, the 623-residue chain is Isocitrate dehydrogenase kinase/phosphatase (623 aa).

ATP contacts are provided by residues 344 to 350 (APGIKGM) and Lys-365. The active site involves Asp-400.

Belongs to the AceK family.

It is found in the cytoplasm. The enzyme catalyses L-seryl-[isocitrate dehydrogenase] + ATP = O-phospho-L-seryl-[isocitrate dehydrogenase] + ADP + H(+). Functionally, bifunctional enzyme which can phosphorylate or dephosphorylate isocitrate dehydrogenase (IDH) on a specific serine residue. This is a regulatory mechanism which enables bacteria to bypass the Krebs cycle via the glyoxylate shunt in response to the source of carbon. When bacteria are grown on glucose, IDH is fully active and unphosphorylated, but when grown on acetate or ethanol, the activity of IDH declines drastically concomitant with its phosphorylation. The protein is Isocitrate dehydrogenase kinase/phosphatase of Polaromonas naphthalenivorans (strain CJ2).